A 324-amino-acid chain; its full sequence is NADH-ubiquinone oxidoreductase chain 1 (324 aa).

8 helical membrane-spanning segments follow: residues Leu-9–Leu-29, Leu-76–Pro-96, Leu-106–Gly-126, Ile-146–Tyr-166, Ala-177–Ala-197, Leu-228–Phe-248, Glu-259–Val-279, and Phe-299–Gly-319.

This sequence belongs to the complex I subunit 1 family.

The protein localises to the mitochondrion inner membrane. It carries out the reaction a ubiquinone + NADH + 5 H(+)(in) = a ubiquinol + NAD(+) + 4 H(+)(out). Its function is as follows. Core subunit of the mitochondrial membrane respiratory chain NADH dehydrogenase (Complex I) that is believed to belong to the minimal assembly required for catalysis. Complex I functions in the transfer of electrons from NADH to the respiratory chain. The immediate electron acceptor for the enzyme is believed to be ubiquinone. This is NADH-ubiquinone oxidoreductase chain 1 (MT-ND1) from Formosania lacustris (Oriental stream loach).